A 55-amino-acid polypeptide reads, in one-letter code: ATP synthase F(0) complex subunit 8 (55 aa).

The chain crosses the membrane as a helical span at residues 4–24 (LNPAPWFMIFMFTWAIFLTIL). Residues 34 to 55 (PNEPSPQGMTTPKTAPWNWPWH) are disordered.

The protein belongs to the ATPase protein 8 family. Component of the ATP synthase complex composed at least of ATP5F1A/subunit alpha, ATP5F1B/subunit beta, ATP5MC1/subunit c (homooctomer), MT-ATP6/subunit a, MT-ATP8/subunit 8, ATP5ME/subunit e, ATP5MF/subunit f, ATP5MG/subunit g, ATP5MK/subunit k, ATP5MJ/subunit j, ATP5F1C/subunit gamma, ATP5F1D/subunit delta, ATP5F1E/subunit epsilon, ATP5PF/subunit F6, ATP5PB/subunit b, ATP5PD/subunit d, ATP5PO/subunit OSCP. ATP synthase complex consists of a soluble F(1) head domain (subunits alpha(3) and beta(3)) - the catalytic core - and a membrane F(0) domain - the membrane proton channel (subunits c, a, 8, e, f, g, k and j). These two domains are linked by a central stalk (subunits gamma, delta, and epsilon) rotating inside the F1 region and a stationary peripheral stalk (subunits F6, b, d, and OSCP).

Its subcellular location is the mitochondrion membrane. Functionally, subunit 8, of the mitochondrial membrane ATP synthase complex (F(1)F(0) ATP synthase or Complex V) that produces ATP from ADP in the presence of a proton gradient across the membrane which is generated by electron transport complexes of the respiratory chain. ATP synthase complex consist of a soluble F(1) head domain - the catalytic core - and a membrane F(1) domain - the membrane proton channel. These two domains are linked by a central stalk rotating inside the F(1) region and a stationary peripheral stalk. During catalysis, ATP synthesis in the catalytic domain of F(1) is coupled via a rotary mechanism of the central stalk subunits to proton translocation. In vivo, can only synthesize ATP although its ATP hydrolase activity can be activated artificially in vitro. Part of the complex F(0) domain. This Gadus morhua (Atlantic cod) protein is ATP synthase F(0) complex subunit 8.